We begin with the raw amino-acid sequence, 300 residues long: Chaperone protein dnaJ 50 (300 aa).

The first 27 residues, 1 to 27 (MAPPVTERWCLALILLFLSLFVQSSTA), serve as a signal peptide directing secretion. The Lumenal segment spans residues 28-122 (IYCGAEDCYA…RAKYGHKSDP (95 aa)). Residues 34–98 (DCYALLGVAQ…TTRAQYDYAI (65 aa)) form the J domain. N-linked (GlcNAc...) asparagine glycosylation is found at Asn-46 and Asn-88. A helical membrane pass occupies residues 123–143 (RAVLVGLLVVLSAFQYLNNVA). Topologically, residues 144 to 206 (RYNEAIATVK…LQIKGAEKPS (63 aa)) are cytoplasmic. The chain crosses the membrane as a helical span at residues 207 to 227 (VWELLGVRFILLPYTIIKLLV). The Lumenal portion of the chain corresponds to 228 to 300 (WYSSWVWRYK…EMRKESKRRR (73 aa)).

As to expression, expressed in leaves, flower buds and flowers.

Its subcellular location is the endoplasmic reticulum membrane. Functionally, may play a role in protein folding in the endoplasmic reticulum. The protein is Chaperone protein dnaJ 50 (C50) of Arabidopsis thaliana (Mouse-ear cress).